We begin with the raw amino-acid sequence, 86 residues long: Putative pro-MCH-like protein 1 (86 aa).

The tract at residues 31–49 (GSVAFPAENGVQDTESTQE) is NGE-like. A disordered region spans residues 38–62 (ENGVQDTESTQEKRETGDEENSAKF). The NEI-like stretch occupies residues 52-64 (ETGDEENSAKFPV). The interval 68–86 (DFDTLSCMLGRVYQSCWQV) is melanin-concentrating hormone-like.

This sequence belongs to the melanin-concentrating hormone family. As to expression, expressed in testis and brain.

The sequence is that of Putative pro-MCH-like protein 1 (PMCHL1) from Homo sapiens (Human).